The following is a 284-amino-acid chain: Diaminopimelate epimerase (284 aa).

The substrate site is built by Asn21, Gln54, and Asn74. The Proton donor role is filled by Cys83. Substrate-binding positions include 84–85 (GN), Asn167, Asn200, and 218–219 (ER). Catalysis depends on Cys227, which acts as the Proton acceptor. Residue 228–229 (GS) participates in substrate binding.

Belongs to the diaminopimelate epimerase family. Homodimer.

The protein resides in the cytoplasm. The catalysed reaction is (2S,6S)-2,6-diaminopimelate = meso-2,6-diaminopimelate. Its pathway is amino-acid biosynthesis; L-lysine biosynthesis via DAP pathway; DL-2,6-diaminopimelate from LL-2,6-diaminopimelate: step 1/1. Functionally, catalyzes the stereoinversion of LL-2,6-diaminopimelate (L,L-DAP) to meso-diaminopimelate (meso-DAP), a precursor of L-lysine and an essential component of the bacterial peptidoglycan. This Buchnera aphidicola subsp. Acyrthosiphon pisum (strain 5A) protein is Diaminopimelate epimerase.